The sequence spans 188 residues: GMP synthase [glutamine-hydrolyzing] subunit A (188 aa).

A Glutamine amidotransferase type-1 domain is found at 2 to 188 (KIYIIDNGGQ…FKNFIEKCRR (187 aa)). Catalysis depends on cysteine 79, which acts as the Nucleophile. Residues histidine 166 and glutamate 168 contribute to the active site.

In terms of assembly, heterodimer composed of a glutamine amidotransferase subunit (A) and a GMP-binding subunit (B).

It catalyses the reaction XMP + L-glutamine + ATP + H2O = GMP + L-glutamate + AMP + diphosphate + 2 H(+). The protein operates within purine metabolism; GMP biosynthesis; GMP from XMP (L-Gln route): step 1/1. Catalyzes the synthesis of GMP from XMP. This Picrophilus torridus (strain ATCC 700027 / DSM 9790 / JCM 10055 / NBRC 100828 / KAW 2/3) protein is GMP synthase [glutamine-hydrolyzing] subunit A.